Here is a 159-residue protein sequence, read N- to C-terminus: SsrA-binding protein (159 aa).

A disordered region spans residues 137 to 159; the sequence is DKRETEKQRDWSREKGRLLKERG.

The protein belongs to the SmpB family.

The protein resides in the cytoplasm. Its function is as follows. Required for rescue of stalled ribosomes mediated by trans-translation. Binds to transfer-messenger RNA (tmRNA), required for stable association of tmRNA with ribosomes. tmRNA and SmpB together mimic tRNA shape, replacing the anticodon stem-loop with SmpB. tmRNA is encoded by the ssrA gene; the 2 termini fold to resemble tRNA(Ala) and it encodes a 'tag peptide', a short internal open reading frame. During trans-translation Ala-aminoacylated tmRNA acts like a tRNA, entering the A-site of stalled ribosomes, displacing the stalled mRNA. The ribosome then switches to translate the ORF on the tmRNA; the nascent peptide is terminated with the 'tag peptide' encoded by the tmRNA and targeted for degradation. The ribosome is freed to recommence translation, which seems to be the essential function of trans-translation. This is SsrA-binding protein from Mesorhizobium japonicum (strain LMG 29417 / CECT 9101 / MAFF 303099) (Mesorhizobium loti (strain MAFF 303099)).